The primary structure comprises 150 residues: METVFDINEIMKILPHRYPFLLVDRIVEYVAGERIVGIKNVSINEPFFQGHFPGHPVMPGVLIVEAMAQVGGIYAYVTLGDEVRDKVCYFASIDNVKFRKPVVPGDQLRIEVTISGCKRGIWCFSARATVNGKLVTEAELKATFADKEKL.

Residue H51 is part of the active site.

The protein belongs to the thioester dehydratase family. FabZ subfamily.

Its subcellular location is the cytoplasm. The catalysed reaction is a (3R)-hydroxyacyl-[ACP] = a (2E)-enoyl-[ACP] + H2O. Involved in unsaturated fatty acids biosynthesis. Catalyzes the dehydration of short chain beta-hydroxyacyl-ACPs and long chain saturated and unsaturated beta-hydroxyacyl-ACPs. This Geobacter sulfurreducens (strain ATCC 51573 / DSM 12127 / PCA) protein is 3-hydroxyacyl-[acyl-carrier-protein] dehydratase FabZ.